The chain runs to 86 residues: Small ribosomal subunit protein bS20 (86 aa).

It belongs to the bacterial ribosomal protein bS20 family.

Its function is as follows. Binds directly to 16S ribosomal RNA. In Exiguobacterium sibiricum (strain DSM 17290 / CCUG 55495 / CIP 109462 / JCM 13490 / 255-15), this protein is Small ribosomal subunit protein bS20.